Consider the following 354-residue polypeptide: Ornithine transcarbamylase, mitochondrial (354 aa).

The N-terminal 32 residues, 1–32 (MLFNLRILLNNAAFRNGHNFMVRNFRCGQPLQ), are a transit peptide targeting the mitochondrion. K70 is modified (N6-acetyllysine; alternate). K70 is modified (N6-succinyllysine; alternate). N6-succinyllysine is present on K80. Residue K88 is modified to N6-acetyllysine; alternate. K88 bears the N6-succinyllysine; alternate mark. 90–93 (STRT) serves as a coordination point for carbamoyl phosphate. The residue at position 133 (S133) is a Phosphoserine. R141 contributes to the carbamoyl phosphate binding site. The residue at position 144 (K144) is an N6-acetyllysine; alternate. An N6-succinyllysine; alternate modification is found at K144. Residues H168 and Q171 each contribute to the carbamoyl phosphate site. L-ornithine is bound at residue N199. Residues K221, K231, and K238 each carry the N6-acetyllysine; alternate modification. N6-succinyllysine; alternate occurs at positions 221, 231, and 238. Position 243 is an N6-acetyllysine (K243). L-ornithine contacts are provided by D263, S267, and M268. Residues K274 and K289 each carry the N6-succinyllysine modification. The residue at position 292 (K292) is an N6-acetyllysine; alternate. K292 is subject to N6-succinyllysine; alternate. C303 functions as the Proton acceptor in the catalytic mechanism. 303-304 (CL) contributes to the carbamoyl phosphate binding site. K307 is subject to N6-acetyllysine; alternate. At K307 the chain carries N6-succinyllysine; alternate. R330 serves as a coordination point for carbamoyl phosphate.

Belongs to the aspartate/ornithine carbamoyltransferase superfamily. OTCase family. Homotrimer. Post-translationally, acetylation at Lys-88 negatively regulates ornithine carbamoyltransferase activity in response to nutrient signals. As to expression, mainly expressed in liver and intestinal mucosa.

The protein localises to the mitochondrion matrix. The catalysed reaction is carbamoyl phosphate + L-ornithine = L-citrulline + phosphate + H(+). The protein operates within nitrogen metabolism; urea cycle; L-citrulline from L-ornithine and carbamoyl phosphate: step 1/1. Negatively regulated by lysine acetylation. Catalyzes the second step of the urea cycle, the condensation of carbamoyl phosphate with L-ornithine to form L-citrulline. The urea cycle ensures the detoxification of ammonia by converting it to urea for excretion. In Homo sapiens (Human), this protein is Ornithine transcarbamylase, mitochondrial.